The sequence spans 481 residues: Ribosomal protein uS12 methylthiotransferase RimO (481 aa).

Residues 8 to 124 (MTVHLVSMGC…IAGRLRTILD (117 aa)) enclose the MTTase N-terminal domain. [4Fe-4S] cluster is bound by residues Cys17, Cys53, and Cys87. The tract at residues 148 to 188 (PTARAEVSVPGHGTAPDLSASVTPDSGPRATRRRLGTGPSA) is disordered. The region spanning 182-413 (LGTGPSAPLK…DLTDELVSQR (232 aa)) is the Radical SAM core domain. Positions 196, 200, and 203 each coordinate [4Fe-4S] cluster. The region spanning 415-480 (EDRIGTRGRV…GVDLVARPAN (66 aa)) is the TRAM domain.

It belongs to the methylthiotransferase family. RimO subfamily. Requires [4Fe-4S] cluster as cofactor.

It is found in the cytoplasm. It catalyses the reaction L-aspartate(89)-[ribosomal protein uS12]-hydrogen + (sulfur carrier)-SH + AH2 + 2 S-adenosyl-L-methionine = 3-methylsulfanyl-L-aspartate(89)-[ribosomal protein uS12]-hydrogen + (sulfur carrier)-H + 5'-deoxyadenosine + L-methionine + A + S-adenosyl-L-homocysteine + 2 H(+). Functionally, catalyzes the methylthiolation of an aspartic acid residue of ribosomal protein uS12. The sequence is that of Ribosomal protein uS12 methylthiotransferase RimO from Cutibacterium acnes (strain DSM 16379 / KPA171202) (Propionibacterium acnes).